The primary structure comprises 421 residues: ATP-dependent RNA helicase RhlB (421 aa).

The Q motif signature appears at 9-37 (QKFSDFALHPQVVEALEKKGFYNCTPIQA). The Helicase ATP-binding domain occupies 40-219 (LPLTLAGRDV…FEQMNNAEYV (180 aa)). 53–60 (AQTGTGKT) is a binding site for ATP. The short motif at 165 to 168 (DEAD) is the DEAD box element. Residues 245 to 390 (RLLQTLIEEE…VSKYNPEALM (146 aa)) form the Helicase C-terminal domain. A disordered region spans residues 396–421 (PLRLTRSRPGNGPRRAGAPRNRRRSG). Residues 402 to 414 (SRPGNGPRRAGAP) show a composition bias toward low complexity.

This sequence belongs to the DEAD box helicase family. RhlB subfamily. Component of the RNA degradosome, which is a multiprotein complex involved in RNA processing and mRNA degradation.

The protein resides in the cytoplasm. It carries out the reaction ATP + H2O = ADP + phosphate + H(+). In terms of biological role, DEAD-box RNA helicase involved in RNA degradation. Has RNA-dependent ATPase activity and unwinds double-stranded RNA. In Salmonella agona (strain SL483), this protein is ATP-dependent RNA helicase RhlB.